The chain runs to 279 residues: Large ribosomal subunit protein uL2 (279 aa).

Disordered stretches follow at residues 33–58 (LLAPLPKKGGRNAHGRITTRHQGGGH) and 223–279 (GVAM…RKRG). Basic residues-rich tracts occupy residues 40–58 (KGGRNAHGRITTRHQGGGH) and 269–279 (VRRRYATRKRG).

Belongs to the universal ribosomal protein uL2 family. As to quaternary structure, part of the 50S ribosomal subunit. Forms a bridge to the 30S subunit in the 70S ribosome.

Functionally, one of the primary rRNA binding proteins. Required for association of the 30S and 50S subunits to form the 70S ribosome, for tRNA binding and peptide bond formation. It has been suggested to have peptidyltransferase activity; this is somewhat controversial. Makes several contacts with the 16S rRNA in the 70S ribosome. The protein is Large ribosomal subunit protein uL2 of Salinispora arenicola (strain CNS-205).